Consider the following 204-residue polypeptide: Nascent polypeptide-associated complex subunit alpha (204 aa).

The span at 1 to 19 (MADPRVEELPDEEVPKTNV) shows a compositional bias: basic and acidic residues. Disordered stretches follow at residues 1–48 (MADP…HSRN) and 119–167 (LAAA…GLEA). Over residues 22–32 (AGSDSESEAGE) the composition is skewed to acidic residues. The region spanning 46–111 (SRNEKKARKA…AKIEDLNSQA (66 aa)) is the NAC-A/B domain. Residues 119 to 128 (LAAAEAAAGE) show a composition bias toward low complexity. Basic and acidic residues predominate over residues 129 to 151 (HAGHDHDHDHGKGKAPETEAKKE). Over residues 152–164 (EEEDDGEEVDETG) the composition is skewed to acidic residues. The 40-residue stretch at 165–204 (LEAKDIELVMAQANVSRKKAVKALRENDNDIVNSIMALSI) folds into the UBA domain.

The protein belongs to the NAC-alpha family. In terms of assembly, part of the nascent polypeptide-associated complex (NAC), consisting of egd2 and egd1. NAC associates with ribosomes via egd1.

The protein localises to the cytoplasm. Its subcellular location is the nucleus. In terms of biological role, component of the nascent polypeptide-associated complex (NAC), a dynamic component of the ribosomal exit tunnel, protecting the emerging polypeptides from interaction with other cytoplasmic proteins to ensure appropriate nascent protein targeting. The NAC complex also promotes mitochondrial protein import by enhancing productive ribosome interactions with the outer mitochondrial membrane and blocks the inappropriate interaction of ribosomes translating non-secretory nascent polypeptides with translocation sites in the membrane of the endoplasmic reticulum. Egd2 may also be involved in transcription regulation. This is Nascent polypeptide-associated complex subunit alpha (egd2) from Aspergillus clavatus (strain ATCC 1007 / CBS 513.65 / DSM 816 / NCTC 3887 / NRRL 1 / QM 1276 / 107).